The chain runs to 840 residues: Protein translocase subunit SecA (840 aa).

ATP contacts are provided by residues Gln-85, 103–107 (GEGKT), and Asp-492. A disordered region spans residues 787–822 (QRERVAKETGASHGGDSQEVKKKPVKKEPKVGRNDL). Over residues 802-819 (DSQEVKKKPVKKEPKVGR) the composition is skewed to basic and acidic residues. Positions 823, 825, 834, and 835 each coordinate Zn(2+).

Belongs to the SecA family. In terms of assembly, monomer and homodimer. Part of the essential Sec protein translocation apparatus which comprises SecA, SecYEG and auxiliary proteins SecDF. Other proteins may also be involved. Zn(2+) is required as a cofactor.

It localises to the cell membrane. Its subcellular location is the cytoplasm. It carries out the reaction ATP + H2O + cellular proteinSide 1 = ADP + phosphate + cellular proteinSide 2.. Functionally, part of the Sec protein translocase complex. Interacts with the SecYEG preprotein conducting channel. Has a central role in coupling the hydrolysis of ATP to the transfer of proteins into and across the cell membrane, serving as an ATP-driven molecular motor driving the stepwise translocation of polypeptide chains across the membrane. The chain is Protein translocase subunit SecA from Clostridium perfringens (strain ATCC 13124 / DSM 756 / JCM 1290 / NCIMB 6125 / NCTC 8237 / Type A).